The following is a 267-amino-acid chain: Cyclin-C (267 aa).

Positions 48-151 (IQVLGEQLKL…LLENLDCCLI (104 aa)) constitute a Cyclin N-terminal domain.

Belongs to the cyclin family. Cyclin C subfamily. As to quaternary structure, component of the Cdk8 module of the Mediator complex.

It is found in the nucleus. In terms of biological role, component of the Mediator complex, a coactivator involved in regulated gene transcription of nearly all RNA polymerase II-dependent genes. Mediator functions as a bridge to convey information from gene-specific regulatory proteins to the basal RNA polymerase II transcription machinery. Mediator is recruited to promoters by direct interactions with regulatory proteins and serves as a scaffold for the assembly of a functional preinitiation complex with RNA polymerase II and the general transcription factors. Binds to and activates cyclin-dependent kinase Cdk8 that phosphorylates the CTD (C-terminal domain) of the large subunit of RNA polymerase II (RNAp II), which may inhibit the formation of a transcription initiation complex. This chain is Cyclin-C (CycC), found in Drosophila pseudoobscura pseudoobscura (Fruit fly).